Here is a 381-residue protein sequence, read N- to C-terminus: Chaperone protein DnaJ (381 aa).

Residues 5–70 enclose the J domain; sequence DYYEVLGIER…EKRSAYDQFG (66 aa). The segment at 137–215 adopts a CR-type zinc-finger fold; the sequence is GTTVDIRVPR…CHGEGRVRET (79 aa). Zn(2+)-binding residues include cysteine 150, cysteine 153, cysteine 167, cysteine 170, cysteine 189, cysteine 192, cysteine 203, and cysteine 206. CXXCXGXG motif repeat units lie at residues 150–157, 167–174, 189–196, and 203–210; these read CEHCDGDG, CPTCHGQG, CPTCHGAG, and CRKCHGEG.

This sequence belongs to the DnaJ family. As to quaternary structure, homodimer. The cofactor is Zn(2+).

Its subcellular location is the cytoplasm. Participates actively in the response to hyperosmotic and heat shock by preventing the aggregation of stress-denatured proteins and by disaggregating proteins, also in an autonomous, DnaK-independent fashion. Unfolded proteins bind initially to DnaJ; upon interaction with the DnaJ-bound protein, DnaK hydrolyzes its bound ATP, resulting in the formation of a stable complex. GrpE releases ADP from DnaK; ATP binding to DnaK triggers the release of the substrate protein, thus completing the reaction cycle. Several rounds of ATP-dependent interactions between DnaJ, DnaK and GrpE are required for fully efficient folding. Also involved, together with DnaK and GrpE, in the DNA replication of plasmids through activation of initiation proteins. The sequence is that of Chaperone protein DnaJ from Chromohalobacter salexigens (strain ATCC BAA-138 / DSM 3043 / CIP 106854 / NCIMB 13768 / 1H11).